A 285-amino-acid polypeptide reads, in one-letter code: Ribosomal RNA small subunit methyltransferase H (285 aa).

S-adenosyl-L-methionine is bound by residues 34 to 36 (AGH), Asp51, Phe75, Asp96, and His103. Positions 258–285 (PLVPSEKEAAQNPRARSAKLRAAEKEAP) are disordered.

It belongs to the methyltransferase superfamily. RsmH family.

Its subcellular location is the cytoplasm. The enzyme catalyses cytidine(1402) in 16S rRNA + S-adenosyl-L-methionine = N(4)-methylcytidine(1402) in 16S rRNA + S-adenosyl-L-homocysteine + H(+). Functionally, specifically methylates the N4 position of cytidine in position 1402 (C1402) of 16S rRNA. This is Ribosomal RNA small subunit methyltransferase H from Thermus thermophilus (strain ATCC BAA-163 / DSM 7039 / HB27).